The chain runs to 200 residues: 3-isopropylmalate dehydratase small subunit 2 (200 aa).

The protein belongs to the LeuD family. LeuD type 1 subfamily. In terms of assembly, heterodimer of LeuC and LeuD.

The catalysed reaction is (2R,3S)-3-isopropylmalate = (2S)-2-isopropylmalate. It participates in amino-acid biosynthesis; L-leucine biosynthesis; L-leucine from 3-methyl-2-oxobutanoate: step 2/4. Functionally, catalyzes the isomerization between 2-isopropylmalate and 3-isopropylmalate, via the formation of 2-isopropylmaleate. This Mannheimia succiniciproducens (strain KCTC 0769BP / MBEL55E) protein is 3-isopropylmalate dehydratase small subunit 2.